The following is a 747-amino-acid chain: MHSASRTRARTRVRTAVSGLLAATVLAAPLTLVAAPAQAATGDDWLHVEGNTIVDSTGKEAILSGVNWFGFNASERVFHGLWSGNITQITQQMAQRGINVVRVPVSTQLLLEWKAGTFLKPNVNTYANPELEGKNSLQIFEYWLTLCQKYGIKVFLDVHSAEADNSGHVYNMWWKGDITTEDVYEGWEWAATRWKDDDTIVGADIKNEPHGTQGSTERAKWDGTTDKDNFKHFAETASKKILAINPNWLVFVEGVEIYPKPGVPWTSTGLTDYYGTWWGGNLRGVRDHPIDLGAHQDQLVYSPHDYGPLVFDQKWFQKDFDKASLTADVWGPNWLFIHDEDIAPLLIGEWGGRLGQDPRQDKWMAALRDLVAERRLSQTFWVLNPNSGDTGGLLLDDWKTWDEVKYSTMLEPTLWKHGGKYVGLDHQVPLGGVGSTTGTSISQVGGGTPDTTAPTAPTGLRAGTPTASTVPLTWSASTDTGGSGVAGYEVYRGTTLVGTTTATSYTVTGLAADSAYTFSVRAKDGAGNTSAASAAVTARTAAGGGDVTAPSVPTGLTAGTPTATSVPLTWTASTDTGGSGVTGYEVYRGSTLVARPTGTSHTVTGLSAATAYTFTVRAVDAAGNVSAASAPVGVTTAPDPTTGSCAVTYTANGWSGGFTAAVTLTNTGTTALSGWTLGFAFPSGQTLTQGWSARWAQSGSSVTATNEAWNAVLAPGASVEIGFSGTHTGTNTAPATFTVGGATCTTR.

The first 39 residues, 1–39, serve as a signal peptide directing secretion; the sequence is MHSASRTRARTRVRTAVSGLLAATVLAAPLTLVAAPAQA. Glutamate 208 serves as the catalytic Proton donor. The active-site Nucleophile is the glutamate 349. A disordered region spans residues 456–475; the sequence is APTGLRAGTPTASTVPLTWS. Fibronectin type-III domains lie at 456–543 and 552–639; these read APTG…TAAG and VPTG…TAPD. Polar residues predominate over residues 465-475; it reads PTASTVPLTWS. Residues 638–747 enclose the CBM2 domain; the sequence is PDPTTGSCAV…TVGGATCTTR (110 aa).

Belongs to the glycosyl hydrolase 5 (cellulase A) family.

The catalysed reaction is Endohydrolysis of (1-&gt;4)-beta-D-glucosidic linkages in cellulose, lichenin and cereal beta-D-glucans.. It functions in the pathway glycan metabolism; cellulose degradation. The polypeptide is Endoglucanase D (cenD) (Cellulomonas fimi).